Consider the following 211-residue polypeptide: MTTAVILGLLALISYLLGSIPTGYLLAKALRGIDIREHGSGSTGATNVLRVVGKGPGLVTFLVDVGKGLGAILVARWVLGQAWSPVPAGWFEFVLLAIAFIAVLAHSKPIWLGWRGGKSVATGLGVLLALNAPTALATFGVFLVVLAVSRIVSLSSMTAAIALPFWFWFFTQSWPFVGFSVIAGAFVIWRHQSNIQRLLAGTEPRLGASQG.

Helical transmembrane passes span 5 to 25 (VILGLLALISYLLGSIPTGYL), 55 to 75 (GPGLVTFLVDVGKGLGAILVA), 85 to 105 (PVPAGWFEFVLLAIAFIAVLA), 126 to 146 (VLLALNAPTALATFGVFLVVL), and 168 to 188 (WFFTQSWPFVGFSVIAGAFVI).

This sequence belongs to the PlsY family. In terms of assembly, probably interacts with PlsX.

It localises to the cell inner membrane. The catalysed reaction is an acyl phosphate + sn-glycerol 3-phosphate = a 1-acyl-sn-glycero-3-phosphate + phosphate. The protein operates within lipid metabolism; phospholipid metabolism. Functionally, catalyzes the transfer of an acyl group from acyl-phosphate (acyl-PO(4)) to glycerol-3-phosphate (G3P) to form lysophosphatidic acid (LPA). This enzyme utilizes acyl-phosphate as fatty acyl donor, but not acyl-CoA or acyl-ACP. This is Glycerol-3-phosphate acyltransferase from Thermosynechococcus vestitus (strain NIES-2133 / IAM M-273 / BP-1).